Here is a 424-residue protein sequence, read N- to C-terminus: Tyrosine--tRNA ligase (424 aa).

Tyr-37 is a binding site for L-tyrosine. The 'HIGH' region motif lies at 42 to 51 (PTADSLHLGH). Lys-144 carries the post-translational modification N6-acetyllysine. Positions 175 and 179 each coordinate L-tyrosine. The short motif at 235-239 (KFGKT) is the 'KMSKS' region element. Residue Lys-238 participates in ATP binding. An S4 RNA-binding domain is found at 357–414 (ADLMQALVDSELQPSRGQARKTIASNAITINGEKQSDPEYFFKEEDRLFGRFTLLRRG).

The protein belongs to the class-I aminoacyl-tRNA synthetase family. TyrS type 1 subfamily. As to quaternary structure, homodimer.

It localises to the cytoplasm. It carries out the reaction tRNA(Tyr) + L-tyrosine + ATP = L-tyrosyl-tRNA(Tyr) + AMP + diphosphate + H(+). Catalyzes the attachment of tyrosine to tRNA(Tyr) in a two-step reaction: tyrosine is first activated by ATP to form Tyr-AMP and then transferred to the acceptor end of tRNA(Tyr). The protein is Tyrosine--tRNA ligase of Shigella dysenteriae serotype 1 (strain Sd197).